The following is a 91-amino-acid chain: YcgL domain-containing protein ETA_15380 (91 aa).

One can recognise a YcgL domain in the interval 1-85 (MFCVIYRSPQ…PLESLLKIHL (85 aa)).

The polypeptide is YcgL domain-containing protein ETA_15380 (Erwinia tasmaniensis (strain DSM 17950 / CFBP 7177 / CIP 109463 / NCPPB 4357 / Et1/99)).